The primary structure comprises 1210 residues: Adenine-specific methyltransferase PglX (1210 aa).

The span at 1181–1194 shows a compositional bias: basic and acidic residues; the sequence is KQGEHGLTDDDLRG. Residues 1181–1210 are disordered; sequence KQGEHGLTDDDLRGWRPPAATRRRRAAAKQ. The segment covering 1201-1210 has biased composition (basic residues); it reads TRRRRAAAKQ.

It belongs to the methyltransferase superfamily. PglX adenine methyltransferase family.

The catalysed reaction is a 2'-deoxyadenosine in DNA + S-adenosyl-L-methionine = an N(6)-methyl-2'-deoxyadenosine in DNA + S-adenosyl-L-homocysteine + H(+). Its function is as follows. BREX systems (bacteriophage exclusion) provide immunity against bacteriophage. Part of a type 2 BREX system. Probably a DNA methyltransferase, it methylates phage DNA in vitro in an S-adenosyl-L-methionine-dependent manner. Previously called the phage growth limitation (Pgl) system, it confers protection against bacteriophage phiC31. The bacteria allows one cycle of phage infection, but subsequent cycles are impaired, protecting the original bacterial colony. The system undergoes high rates (10(-3) to 10(-4)) of phase reversion, i.e. loss and regain of phiC31 resistance. When the pglW-pglX-pglY-pglZ genes are transformed into a susceptible S.lividans (strain 1326) they confer resistance to infection by phage phiC31 and phiBT1; all 4 genes are necessary. In terms of biological role, probably a toxic component of a type II toxin-antitoxin (TA) system. The toxic activity is inhibited by its cognate antitoxin PglZ. Functionally, may be a subtypes G and alpha restriction enzyme that recognizes and cleaves an unknown sequence. Methylates an adenine residue in the same sequence. In Streptomyces coelicolor (strain ATCC BAA-471 / A3(2) / M145), this protein is Adenine-specific methyltransferase PglX.